A 513-amino-acid polypeptide reads, in one-letter code: MQLNASEISNLIKDRIKGFDGAAESGSEGTVVSIADGIALIHGVSDVMYGEMVQFDEATFGMALNLERDSVGVVVLGEYEHISEGDKVTCTGRILEVPVGPELNGRVVDGLGRPIDGKGSIDAKVTSPIERIAPGVIERQSVDQPMMTGIKSIDSMIPVGRGQRELIIGDRQTGKTAIAIDAIISQKNTGVKCIYVAMGQKASTVNNVARKLEEYGAMDNTVIVAANASDPAALQYLAAYAGCAMGEYYRDRGEDALIIYDDLTKQAQAYRQISLLLRRPPGREAFPGDVFYLHSRLLERAARVNAEYVEKFTNGEVKGKTGSLTALPIIETQAGDVSAFVPTNVISITDGQIFLETGLFSQGIRPAVNAGLSVSRVGGSAQTKAIKKLGGGIRLDLAQYRELAAFAQFASDLDPATKAQLERGKRVTELMKQKQYSPLTIAEMAVSLYAANEGYLDDVEVEKVLDFEAALHAYLNSNNADLAAKINAKGDWNDEIISEVKAMIDAFKANGVY.

Position 169–176 (169–176) interacts with ATP; the sequence is GDRQTGKT.

It belongs to the ATPase alpha/beta chains family. In terms of assembly, F-type ATPases have 2 components, CF(1) - the catalytic core - and CF(0) - the membrane proton channel. CF(1) has five subunits: alpha(3), beta(3), gamma(1), delta(1), epsilon(1). CF(0) has three main subunits: a(1), b(2) and c(9-12). The alpha and beta chains form an alternating ring which encloses part of the gamma chain. CF(1) is attached to CF(0) by a central stalk formed by the gamma and epsilon chains, while a peripheral stalk is formed by the delta and b chains.

Its subcellular location is the cell inner membrane. The enzyme catalyses ATP + H2O + 4 H(+)(in) = ADP + phosphate + 5 H(+)(out). In terms of biological role, produces ATP from ADP in the presence of a proton gradient across the membrane. The alpha chain is a regulatory subunit. This chain is ATP synthase subunit alpha, found in Hydrogenovibrio crunogenus (strain DSM 25203 / XCL-2) (Thiomicrospira crunogena).